The primary structure comprises 1189 residues: Nucleolar protein NET1 (1189 aa).

2 positions are modified to phosphoserine: serine 60 and serine 166. 2 disordered regions span residues serine 160–glycine 260 and threonine 345–lysine 1189. Over residues serine 166–serine 180 the composition is skewed to low complexity. A compositionally biased stretch (polar residues) spans isoleucine 200–valine 210. Phosphoserine is present on residues serine 231 and serine 252. A compositionally biased stretch (pro residues) spans leucine 244–proline 253. The span at proline 368–glutamate 381 shows a compositional bias: basic and acidic residues. The span at proline 391–glycine 407 shows a compositional bias: low complexity. Residues alanine 432–lysine 450 are compositionally biased toward polar residues. 4 positions are modified to phosphoserine: serine 437, serine 439, serine 447, and serine 452. Over residues alanine 470–lysine 486 the composition is skewed to polar residues. At serine 497 the chain carries Phosphoserine. Positions asparagine 526–isoleucine 543 are enriched in basic and acidic residues. The segment covering isoleucine 590–aspartate 601 has biased composition (acidic residues). Residues serine 641–leucine 657 show a composition bias toward polar residues. Basic and acidic residues predominate over residues lysine 659–proline 668. Threonine 676 carries the post-translational modification Phosphothreonine. Positions lysine 682–alanine 691 are enriched in low complexity. Residues lysine 692–glutamate 702 show a composition bias toward basic and acidic residues. Residues threonine 710–aspartate 725 show a composition bias toward acidic residues. The span at lysine 756–lysine 777 shows a compositional bias: basic and acidic residues. Over residues lysine 778–serine 792 the composition is skewed to polar residues. Positions lysine 806 to threonine 815 are enriched in basic and acidic residues. The segment covering serine 822–valine 833 has biased composition (low complexity). Serine 830 bears the Phosphoserine mark. 3 stretches are compositionally biased toward basic and acidic residues: residues aspartate 884–lysine 897, alanine 905–serine 919, and alanine 945–alanine 954. Residues serine 969–serine 999 are compositionally biased toward low complexity. Positions arginine 1023–isoleucine 1039 are enriched in polar residues. A Phosphothreonine modification is found at threonine 1042. Over residues serine 1055–serine 1070 the composition is skewed to low complexity. Serine 1056 and serine 1059 each carry phosphoserine. Over residues proline 1095–glutamine 1109 the composition is skewed to basic and acidic residues. 2 stretches are compositionally biased toward low complexity: residues aspartate 1123–serine 1137 and serine 1158–leucine 1169.

To yeast YKR010c. As to quaternary structure, component of the RENT complex which is composed of at least NET1, CDC14 and SIR2. Interacts with NSI1. In terms of processing, phosphorylated by CDC5.

It localises to the nucleus. The protein resides in the nucleolus. Has a role in chromosome maintenance and is involved in mitotic exit. Inhibits the action of CDC14 by sequestering it in the nucleolus. Also binds to RNA polymerase I and stimulates rRNA synthesis. Influences RDNA chromatin by tethering SIR2 to rDNA in the nucleolus. The protein is Nucleolar protein NET1 (NET1) of Saccharomyces cerevisiae (strain ATCC 204508 / S288c) (Baker's yeast).